A 266-amino-acid polypeptide reads, in one-letter code: 15-hydroxyprostaglandin dehydrogenase [NAD(+)] (266 aa).

NAD(+)-binding positions include 12–20, 36–37, 63–65, and asparagine 91; these read GAAQGIGRA, DW, and CDV. Serine 138 and glutamine 148 together coordinate substrate. Tyrosine 151 functions as the Proton acceptor in the catalytic mechanism. Residues 151 to 155 and 186 to 188 each bind NAD(+); these read YCASK and VDT.

It belongs to the short-chain dehydrogenases/reductases (SDR) family. In terms of assembly, homodimer.

It localises to the cytoplasm. The catalysed reaction is prostaglandin E2 + NAD(+) = 15-oxoprostaglandin E2 + NADH + H(+). It catalyses the reaction (15S)-hydroxy-(5Z,8Z,11Z,13E)-eicosatetraenoate + NAD(+) = 15-oxo-(5Z,8Z,11Z,13E)-eicosatetraenoate + NADH + H(+). The enzyme catalyses (11R)-hydroxy-(5Z,8Z,12E,14Z)-eicosatetraenoate + NAD(+) = 11-oxo-(5Z,8Z,12E,14Z)-eicosatetraenoate + NADH + H(+). It carries out the reaction lipoxin A4 + NAD(+) = 15-oxo-(5S,6R)-dihydroxy-(7E,9E,11Z,13E)-eicosatetraenoate + NADH + H(+). The catalysed reaction is 15-oxo-(5S,6R)-dihydroxy-(7E,9E,11Z)-eicosatrienoate + NADH + H(+) = (5S,6R,15S)-trihydroxy-(7E,9E,11Z)-eicosatrienoate + NAD(+). It catalyses the reaction prostaglandin A1 + NAD(+) = 15-oxo-prostaglandin A1 + NADH + H(+). The enzyme catalyses prostaglandin E1 + NAD(+) = 15-oxoprostaglandin E1 + NADH + H(+). It carries out the reaction 14-hydroxy-(4Z,7Z,10Z,12E,16Z,19Z)-docosahexaenoate + NAD(+) = 14-oxo-(4Z,7Z,10Z,12E,16Z,19Z)-docosahexaenoate + NADH + H(+). The catalysed reaction is resolvin E1 + NAD(+) = 18-oxo-resolvin E1 + NADH + H(+). It catalyses the reaction resolvin D1 + NAD(+) = 8-oxoresolvin D1 + NADH + H(+). The enzyme catalyses resolvin D1 + NAD(+) = 17-oxoresolvin D1 + NADH + H(+). It carries out the reaction resolvin D2 + NAD(+) = 7-oxoresolvin D2 + NADH + H(+). The catalysed reaction is resolvin D2 + NAD(+) = 16-oxoresolvin D2 + NADH + H(+). Functionally, catalyzes the NAD-dependent dehydrogenation (oxidation) of a broad array of hydroxylated polyunsaturated fatty acids (mainly eicosanoids and docosanoids, including prostaglandins, lipoxins and resolvins), yielding their corresponding keto (oxo) metabolites. Decreases the levels of the pro-proliferative prostaglandins such as prostaglandin E2 (whose activity is increased in cancer because of an increase in the expression of cyclooxygenase 2) and generates oxo-fatty acid products that can profoundly influence cell function by abrogating pro-inflammatory cytokine expression. Converts resolvins E1, D1 and D2 to their oxo products, which represents a mode of resolvin inactivation. Resolvin E1 plays important roles during the resolution phase of acute inflammation, while resolvins D1 and D2 have a unique role in obesity-induced adipose inflammation. This Bos taurus (Bovine) protein is 15-hydroxyprostaglandin dehydrogenase [NAD(+)] (HPGD).